The primary structure comprises 1075 residues: DNA-directed RNA polymerase subunit beta (1075 aa).

Belongs to the RNA polymerase beta chain family. In plastids the minimal PEP RNA polymerase catalytic core is composed of four subunits: alpha, beta, beta', and beta''. When a (nuclear-encoded) sigma factor is associated with the core the holoenzyme is formed, which can initiate transcription.

It is found in the plastid. The protein resides in the chloroplast. It carries out the reaction RNA(n) + a ribonucleoside 5'-triphosphate = RNA(n+1) + diphosphate. Functionally, DNA-dependent RNA polymerase catalyzes the transcription of DNA into RNA using the four ribonucleoside triphosphates as substrates. This chain is DNA-directed RNA polymerase subunit beta, found in Pinus thunbergii (Japanese black pine).